A 265-amino-acid polypeptide reads, in one-letter code: Type III pantothenate kinase (265 aa).

6–13 (DVGNTHTV) is an ATP binding site. Substrate is bound at residue 112 to 115 (GADR). Aspartate 114 (proton acceptor) is an active-site residue. A K(+)-binding site is contributed by aspartate 134. Residue threonine 137 participates in ATP binding. A substrate-binding site is contributed by threonine 189.

It belongs to the type III pantothenate kinase family. Homodimer. Requires NH4(+) as cofactor. It depends on K(+) as a cofactor.

It localises to the cytoplasm. The catalysed reaction is (R)-pantothenate + ATP = (R)-4'-phosphopantothenate + ADP + H(+). It functions in the pathway cofactor biosynthesis; coenzyme A biosynthesis; CoA from (R)-pantothenate: step 1/5. Its function is as follows. Catalyzes the phosphorylation of pantothenate (Pan), the first step in CoA biosynthesis. This Streptomyces griseus subsp. griseus (strain JCM 4626 / CBS 651.72 / NBRC 13350 / KCC S-0626 / ISP 5235) protein is Type III pantothenate kinase.